The following is a 738-amino-acid chain: 1,4-alpha-glucan branching enzyme GlgB (738 aa).

The Nucleophile role is filled by aspartate 399. The Proton donor role is filled by glutamate 452.

This sequence belongs to the glycosyl hydrolase 13 family. GlgB subfamily. In terms of assembly, monomer.

The catalysed reaction is Transfers a segment of a (1-&gt;4)-alpha-D-glucan chain to a primary hydroxy group in a similar glucan chain.. It functions in the pathway glycan biosynthesis; glycogen biosynthesis. Catalyzes the formation of the alpha-1,6-glucosidic linkages in glycogen by scission of a 1,4-alpha-linked oligosaccharide from growing alpha-1,4-glucan chains and the subsequent attachment of the oligosaccharide to the alpha-1,6 position. The polypeptide is 1,4-alpha-glucan branching enzyme GlgB (Chlamydia trachomatis serovar A (strain ATCC VR-571B / DSM 19440 / HAR-13)).